A 294-amino-acid polypeptide reads, in one-letter code: Putative immediate early glycoprotein (294 aa).

The N-terminal stretch at 1 to 21 is a signal peptide; it reads MKKLTMESLLVYTFVMGVCFT. The helical transmembrane segment at 262-282 threads the bilayer; sequence LFFLAGGAFTMLLLLCCLSMI.

This sequence belongs to the herpesviridae immediate early glycoprotein family.

The protein localises to the host membrane. In Homo sapiens (Human), this protein is Putative immediate early glycoprotein (U18).